The following is a 281-amino-acid chain: sn-glycerol-3-phosphate transport system permease protein UgpE (281 aa).

The next 6 membrane-spanning stretches (helical) occupy residues 16–36, 85–105, 113–133, 142–162, 202–222, and 247–267; these read LILG…AATL, FSIT…IVWF, FFWM…FPTV, LNSY…TFLF, ALFV…LLII, and WNQV…IVLA. An ABC transmembrane type-1 domain is found at 77-268; that stretch reads MLNSFIMAFS…IPPVVIVLAM (192 aa).

The protein belongs to the binding-protein-dependent transport system permease family. UgpAE subfamily. As to quaternary structure, the complex is composed of two ATP-binding proteins (UgpC), two transmembrane proteins (UgpA and UgpE) and a solute-binding protein (UgpB).

Its subcellular location is the cell inner membrane. Functionally, part of the ABC transporter complex UgpBAEC involved in sn-glycerol-3-phosphate (G3P) import. Probably responsible for the translocation of the substrate across the membrane. This is sn-glycerol-3-phosphate transport system permease protein UgpE (ugpE) from Salmonella typhi.